The chain runs to 523 residues: MAGSTSASLQTPYFPSSTQINPVRVDHTLPLPPSQPSLSFTQGLLVGQLSVVLLIGAFIKFFIFGEAPPPPSRGLSNRTSTHPRSYSINAASTDSSPRPLREKPSTSNILRPVPSSSTNTRSILRKTYYSATPTHPTPKHGRPRLYHSSHQPESLDWFNVLIAQTIAQYRQTAYILKDSPTSSILASLSETLNNPEKKPSFIDIIKVTDISLGEEFPIFSNCRVIAVEDPNSDGGRLQALMDVDLSDDNLSLAIETSLLLNYPKPFSAVLPVALAVSVVRFSGTLCISFVPGPRTSDQTMSPIPTPHDTTSEAIDDQSSDQPSPAQNPDGPKDAHANTSNTTDASSKHGIPKTSLAFSFLPDYRLDLSVRSLIGSRSRLQDVPKVAQLVEARVQSWFEERVVEPRVQVVGLPNIWPRMGRTGLRSSQEEPEAGSGSVEIPVMTSPGADGVSGGGGSGGGSGGGGGGMRGIDRGLSGREAGYEALRYRHAACGGHQNQSGRDGGRGGNEQFAMPGSMPDTVTET.

Residues 1-43 (MAGSTSASLQTPYFPSSTQINPVRVDHTLPLPPSQPSLSFTQG) lie on the Lumenal side of the membrane. A helical transmembrane segment spans residues 44 to 64 (LLVGQLSVVLLIGAFIKFFIF). Over 65 to 523 (GEAPPPPSRG…GSMPDTVTET (459 aa)) the chain is Cytoplasmic. Disordered regions lie at residues 70 to 118 (PPSR…SSST), 128 to 147 (YYSA…RLYH), 295 to 349 (TSDQ…SKHG), 420 to 474 (RTGL…DRGL), and 492 to 523 (GGHQ…VTET). 2 stretches are compositionally biased toward polar residues: residues 74–96 (GLSN…TDSS) and 105–118 (STSN…SSST). The segment covering 137–147 (TPKHGRPRLYH) has biased composition (basic residues). Residues 151 to 412 (QPESLDWFNV…EPRVQVVGLP (262 aa)) enclose the SMP-LTD domain. Positions 295-312 (TSDQTMSPIPTPHDTTSE) are enriched in polar residues. A compositionally biased stretch (gly residues) spans 449–468 (GVSGGGGSGGGSGGGGGGMR).

The protein belongs to the MMM1 family. In terms of assembly, homodimer. Component of the ER-mitochondria encounter structure (ERMES) or MDM complex, composed of MMM1, MDM10, MDM12 and MDM34. An MMM1 homodimer associates with one molecule of MDM12 on each side in a pairwise head-to-tail manner, and the SMP-LTD domains of MMM1 and MDM12 generate a continuous hydrophobic tunnel for phospholipid trafficking.

The protein resides in the endoplasmic reticulum membrane. In terms of biological role, component of the ERMES/MDM complex, which serves as a molecular tether to connect the endoplasmic reticulum (ER) and mitochondria. Components of this complex are involved in the control of mitochondrial shape and protein biogenesis, and function in nonvesicular lipid trafficking between the ER and mitochondria. The MDM12-MMM1 subcomplex functions in the major beta-barrel assembly pathway that is responsible for biogenesis of all outer membrane beta-barrel proteins, and acts in a late step after the SAM complex. The MDM10-MDM12-MMM1 subcomplex further acts in the TOM40-specific pathway after the action of the MDM12-MMM1 complex. Essential for establishing and maintaining the structure of mitochondria and maintenance of mtDNA nucleoids. This Paracoccidioides lutzii (strain ATCC MYA-826 / Pb01) (Paracoccidioides brasiliensis) protein is Maintenance of mitochondrial morphology protein 1.